The primary structure comprises 368 residues: Cytochrome b (368 aa).

Transmembrane regions (helical) follow at residues 32–52, 76–98, 112–132, and 174–194; these read FGFLVAMTFVLQIITGITLAF, WEFRMLHATTASFVFLCILIHMT, AWMSGLVLYLLTIATAFLGYV, and FFVLHFILPFIGCIIIVLHIF. Heme b-binding residues include histidine 82 and histidine 96. Heme b contacts are provided by histidine 178 and histidine 192. Histidine 197 serves as a coordination point for a ubiquinone. Helical transmembrane passes span 219–239, 285–305, 323–343, and 347–367; these read MLMTDAKCLSYLIGLIFLQAA, GLLVFMSSLINLGLLSEIRAL, GWVIIWVYSMIFLIIIGSAIP, and YILYGRLATILYLTTGLVLCL.

Belongs to the cytochrome b family. As to quaternary structure, the main subunits of complex b-c1 are: cytochrome b, cytochrome c1 and the Rieske protein. Heme b is required as a cofactor.

The protein resides in the mitochondrion inner membrane. Functionally, component of the ubiquinol-cytochrome c reductase complex (complex III or cytochrome b-c1 complex) that is part of the mitochondrial respiratory chain. The b-c1 complex mediates electron transfer from ubiquinol to cytochrome c. Contributes to the generation of a proton gradient across the mitochondrial membrane that is then used for ATP synthesis. This Toxoplasma gondii protein is Cytochrome b (MT-CYB).